A 241-amino-acid chain; its full sequence is tRNA (guanine-N(7)-)-methyltransferase (241 aa).

Over residues 1 to 10 (MTESNETPNT) the composition is skewed to polar residues. The interval 1–21 (MTESNETPNTPEAGDESKHRR) is disordered. S-adenosyl-L-methionine-binding residues include Glu-71, Glu-96, Asp-123, and Asp-146. Asp-146 is an active-site residue. Substrate contacts are provided by residues Lys-150, Asp-182, and 219–222 (TKFE).

This sequence belongs to the class I-like SAM-binding methyltransferase superfamily. TrmB family.

It carries out the reaction guanosine(46) in tRNA + S-adenosyl-L-methionine = N(7)-methylguanosine(46) in tRNA + S-adenosyl-L-homocysteine. Its pathway is tRNA modification; N(7)-methylguanine-tRNA biosynthesis. Functionally, catalyzes the formation of N(7)-methylguanine at position 46 (m7G46) in tRNA. The sequence is that of tRNA (guanine-N(7)-)-methyltransferase from Pseudomonas fluorescens (strain SBW25).